The sequence spans 338 residues: Limbic system-associated membrane protein (338 aa).

The N-terminal stretch at 1 to 28 is a signal peptide; it reads MVARAQPDRKQLPLVLLRLLCLLPTGLP. 3 Ig-like C2-type domains span residues 29–122, 132–214, and 219–306; these read VRSV…PKTS, PKIS…VRVT, and PTIT…LYLY. Asparagine 40, asparagine 66, asparagine 136, and asparagine 148 each carry an N-linked (GlcNAc...) asparagine glycan. An intrachain disulfide couples cysteine 53 to cysteine 111. Disulfide bonds link cysteine 153–cysteine 197 and cysteine 239–cysteine 290. N-linked (GlcNAc...) asparagine glycosylation is found at asparagine 279, asparagine 287, asparagine 300, and asparagine 315. Asparagine 315 carries GPI-anchor amidated asparagine lipidation. Positions 316–338 are cleaved as a propeptide — removed in mature form; the sequence is GSVSLAVPLWLLAASLLCLLSKC.

The protein belongs to the immunoglobulin superfamily. IgLON family.

It localises to the cell membrane. In terms of biological role, mediates selective neuronal growth and axon targeting. Probably serves as a recognition molecule for the formation of limbic connections. The polypeptide is Limbic system-associated membrane protein (Gallus gallus (Chicken)).